The chain runs to 328 residues: B3 domain-containing protein At5g60140 (328 aa).

Residues 13–109 (SKFFKPYLPS…FFNFSIFDHE (97 aa)) constitute a DNA-binding region (TF-B3). Residues 145–221 (LNSDDSDDSD…EDEDDLEDED (77 aa)) form a disordered region. Composition is skewed to acidic residues over residues 148 to 182 (DDSDDSDNDYSVEDDNVAEDDDGLEDEVDVEAEDG) and 190 to 221 (GLEDEDDDEAEDGYDAKDDDGLEDEDDLEDED).

The protein localises to the nucleus. In Arabidopsis thaliana (Mouse-ear cress), this protein is B3 domain-containing protein At5g60140.